A 383-amino-acid polypeptide reads, in one-letter code: Protein RecA (383 aa).

79–86 (GPESSGKT) is an ATP binding site. Residues 347–369 (IEEDNTEEKQSSKEKETDEKADK) are disordered. The segment covering 353-369 (EEKQSSKEKETDEKADK) has biased composition (basic and acidic residues).

This sequence belongs to the RecA family.

It is found in the cytoplasm. In terms of biological role, can catalyze the hydrolysis of ATP in the presence of single-stranded DNA, the ATP-dependent uptake of single-stranded DNA by duplex DNA, and the ATP-dependent hybridization of homologous single-stranded DNAs. It interacts with LexA causing its activation and leading to its autocatalytic cleavage. This chain is Protein RecA, found in Streptococcus mutans serotype c (strain ATCC 700610 / UA159).